Reading from the N-terminus, the 266-residue chain is 22 kDa alpha-zein 14 (266 aa).

The signal sequence occupies residues 1-21 (MATKILSLLALLALFASATNA).

The protein belongs to the zein family.

Functionally, zeins are major seed storage proteins. This Zea mays (Maize) protein is 22 kDa alpha-zein 14.